The primary structure comprises 245 residues: Adapter protein MecA (245 aa).

This sequence belongs to the MecA family. In terms of assembly, homodimer.

Its function is as follows. Enables the recognition and targeting of unfolded and aggregated proteins to the ClpC protease or to other proteins involved in proteolysis. This chain is Adapter protein MecA, found in Streptococcus pneumoniae serotype 19F (strain G54).